The primary structure comprises 156 residues: uncharacterized protein (156 aa).

Residues 1-12 are compositionally biased toward pro residues; it reads MSARPSLPPLPA. 2 disordered regions span residues 1–89 and 129–156; these read MSAR…PPPA and PLSP…TMRD. Over residues 49–67 the composition is skewed to basic and acidic residues; the sequence is ARAEEAGGEEGKREAEAWT.

This is an uncharacterized protein from Homo sapiens (Human).